A 250-amino-acid polypeptide reads, in one-letter code: U6 snRNA phosphodiesterase 1 (250 aa).

Positions 1–31 (MALVSYSSSEEDEGETSEPPGRRLPPLPPPT) are disordered. The segment covering 22–31 (RRLPPLPPPT) has biased composition (pro residues). The Proton acceptor role is filled by His-105. 105–107 (HIS) provides a ligand contact to AMP. Residues Gln-149, Tyr-187, and 191 to 195 (SFHVS) each bind UMP. AMP-binding positions include Tyr-187 and 189–195 (EPSFHVS). His-193 acts as the Proton donor in catalysis.

Belongs to the 2H phosphoesterase superfamily. USB1 family.

The protein resides in the nucleus. It catalyses the reaction a 3'-end uridylyl-uridine-RNA = a 3'-end 2',3'-cyclophospho-uridine-RNA + uridine. It carries out the reaction a 3'-end uridylyl-adenosine-RNA = a 3'-end 2',3'-cyclophospho-uridine-RNA + adenosine. In terms of biological role, 3'-5' RNA exonuclease that trims the 3' end of oligo(U) and oligo(A) tracts of the pre-U6 small nuclear RNA (snRNA) molecule, leading to the formation of a mature U6 snRNA 3' end-terminated with a 2',3'-cyclic phosphate. Participates in the U6 snRNA 3' end processing that prevents U6 snRNA degradation. In addition also removes uridines from the 3' end of U6atac snRNA and possibly the vault RNA VTRNA1-1. This Xenopus laevis (African clawed frog) protein is U6 snRNA phosphodiesterase 1.